The following is a 299-amino-acid chain: NAD kinase (299 aa).

Aspartate 71 serves as the catalytic Proton acceptor. NAD(+) is bound by residues 71–72 (DG), 145–146 (ND), arginine 173, aspartate 175, 186–191 (TAYALS), alanine 210, and glutamine 248.

Belongs to the NAD kinase family. A divalent metal cation serves as cofactor.

The protein localises to the cytoplasm. The catalysed reaction is NAD(+) + ATP = ADP + NADP(+) + H(+). Involved in the regulation of the intracellular balance of NAD and NADP, and is a key enzyme in the biosynthesis of NADP. Catalyzes specifically the phosphorylation on 2'-hydroxyl of the adenosine moiety of NAD to yield NADP. The chain is NAD kinase from Bordetella avium (strain 197N).